The sequence spans 572 residues: Receptor-transporting protein 5 (572 aa).

The segment at 52–148 (SRLQCGHCPG…AYEGCCEACE (97 aa)) adopts a 3CxxC-type zinc-finger fold. A helical transmembrane segment spans residues 544 to 560 (FWIWVSMTVCVFWLMCM).

The protein localises to the membrane. This is Receptor-transporting protein 5 (RTP5) from Homo sapiens (Human).